Consider the following 296-residue polypeptide: Fructose-bisphosphate aldolase class 1 (296 aa).

Catalysis depends on glutamate 175, which acts as the Proton acceptor. Lysine 212 acts as the Schiff-base intermediate with dihydroxyacetone-P in catalysis.

Belongs to the class I fructose-bisphosphate aldolase family.

The enzyme catalyses beta-D-fructose 1,6-bisphosphate = D-glyceraldehyde 3-phosphate + dihydroxyacetone phosphate. It functions in the pathway carbohydrate degradation; glycolysis; D-glyceraldehyde 3-phosphate and glycerone phosphate from D-glucose: step 4/4. The sequence is that of Fructose-bisphosphate aldolase class 1 from Staphylococcus aureus (strain bovine RF122 / ET3-1).